The sequence spans 89 residues: Arminin 7591 (89 aa).

The N-terminal stretch at 1–18 is a signal peptide; it reads MRSAFAVLFLALIAITYS. Positions 19–58 are excised as a propeptide; that stretch reads KNYEDVKEEIKNEVENEILKDLEEDVNEFDDNVQEEVNDA. Residue L86 is modified to Leucine amide.

It belongs to the arminin family. In terms of tissue distribution, expressed in entodermal epithelium along the body column.

It is found in the secreted. Its subcellular location is the target cell membrane. In terms of biological role, antimicrobial peptide with a broad-spectrum antimicrobial activity. Keeps its antibacterial activity under a wide range of salt concentrations that mimic physiological conditions of human blood, which is surprising, since Hydra is an obligate freshwater animal with nearly no salt tolerance. Does not affect red blood cells. The protein is Arminin 7591 of Hydra vulgaris (Hydra).